Here is a 147-residue protein sequence, read N- to C-terminus: Ras-related protein RabK2 (147 aa).

GTP is bound by residues 11 to 15 (NTHGS) and 63 to 66 (TKSD). Cysteine 145 carries the S-geranylgeranyl cysteine lipid modification.

Belongs to the small GTPase superfamily. Rab family.

The protein resides in the cell membrane. This is Ras-related protein RabK2 (rabK2) from Dictyostelium discoideum (Social amoeba).